Reading from the N-terminus, the 271-residue chain is MAAEEPQQQKQEPLGSDSEGVNCLAYDEAIMAQQDRIQQEIAVQNPLVSERLELSVLYKEYAEDDNIYQQKIKDLHKKYSYIRKTRPDGNCFYRAFGFSHLEALLDDSKELQRFKAVSAKSKEDLVSQGFTEFTIEDFHNTFMDLIEQVEKQTSVADLLASFNDQSTSDYLVVYLRLLTSGYLQRESKFFEHFIEGGRTVKEFCQQEVEPMCKESDHIHIIALAQALSVSIQVEYMDRGEGGTTNPHVFPEGSEPKVYLLYRPGHYDILYK.

Ala2 bears the N-acetylalanine mark. At Ser16 the chain carries Phosphoserine. A Phosphotyrosine modification is found at Tyr26. Residues 80 to 271 (SYIRKTRPDG…RPGHYDILYK (192 aa)) enclose the OTU domain. The active site involves Asp88. Cys91 serves as the catalytic Nucleophile. Ubiquitin-conjugating enzyme E2 binding stretches follow at residues 130–138 (FTEFTIEDF) and 169–177 (DYLVVYLRL). The interval 189–195 (FFEHFIE) is free ubiquitin binding. Residues 206-213 (QEVEPMCK) are ubiquitin-conjugating enzyme E2 binding. Free ubiquitin binding stretches follow at residues 214 to 221 (ESDHIHII) and 245 to 251 (NPHVFPE). His265 is an active-site residue.

Belongs to the peptidase C65 family. As to quaternary structure, interacts with RNF128. Forms a ternary complex with RNF128 and USP8. Interacts with FUS and RACK1. Interacts with UBE2D1/UBCH5A, UBE2W/UBC16 and UBE2N/UBC13. Post-translationally, phosphorylation at Tyr-26 by SRC and SRMS promotes deubiquitination of RPTOR via a non-catalytic process.

It localises to the cytoplasm. The catalysed reaction is Thiol-dependent hydrolysis of ester, thioester, amide, peptide and isopeptide bonds formed by the C-terminal Gly of ubiquitin (a 76-residue protein attached to proteins as an intracellular targeting signal).. Its activity is regulated as follows. By free ubiquitin: binding of free ubiquitin triggers conformational changes in the OTU domain and formation of a ubiquitin-binding helix in the N-terminus, promoting binding of the conjugated donor ubiquitin in UBE2N/UBC13 to OTUB1. In terms of biological role, hydrolase that can specifically remove compared to 'Lys-48'-linked conjugated ubiquitin from proteins and plays an important regulatory role at the level of protein turnover by preventing degradation. Regulator of T-cell anergy, a phenomenon that occurs when T-cells are rendered unresponsive to antigen rechallenge and no longer respond to their cognate antigen. Acts via its interaction with RNF128/GRAIL. Surprisingly, it regulates RNF128-mediated ubiquitination, but does not deubiquitinate polyubiquitinated RNF128. Deubiquitinates estrogen receptor alpha (ESR1). Mediates deubiquitination of 'Lys-48'-linked polyubiquitin chains, but not 'Lys-63'-linked polyubiquitin chains. Not able to cleave di-ubiquitin. Also capable of removing NEDD8 from NEDD8 conjugates, but with a much lower preference compared to 'Lys-48'-linked ubiquitin. Plays a key non-catalytic role in DNA repair regulation by inhibiting activity of RNF168, an E3 ubiquitin-protein ligase that promotes accumulation of 'Lys-63'-linked histone H2A and H2AX at DNA damage sites. Inhibits RNF168 independently of ubiquitin thioesterase activity by binding and inhibiting UBE2N/UBC13, the E2 partner of RNF168, thereby limiting spreading of 'Lys-63'-linked histone H2A and H2AX marks. Inhibition occurs by binding to free ubiquitin: free ubiquitin acts as an allosteric regulator that increases affinity for UBE2N/UBC13 and disrupts interaction with UBE2V1. The OTUB1-UBE2N/UBC13-free ubiquitin complex adopts a configuration that mimics a cleaved 'Lys48'-linked di-ubiquitin chain. Acts as a regulator of mTORC1 and mTORC2 complexes. When phosphorylated at Tyr-26, acts as an activator of the mTORC1 complex by mediating deubiquitination of RPTOR via a non-catalytic process: acts by binding and inhibiting the activity of the ubiquitin-conjugating enzyme E2 (UBE2D1/UBCH5A, UBE2W/UBC16 and UBE2N/UBC13), thereby preventing ubiquitination of RPTOR. Can also act as an inhibitor of the mTORC1 and mTORC2 complexes in response to amino acids by mediating non-catalytic deubiquitination of DEPTOR. The polypeptide is Ubiquitin thioesterase OTUB1 (Otub1) (Mus musculus (Mouse)).